A 1006-amino-acid chain; its full sequence is Unconventional myosin-Id (1006 aa).

At alanine 2 the chain carries N-acetylalanine. A Myosin motor domain is found at phenylalanine 9–alanine 695. An ATP-binding site is contributed by glycine 102–threonine 109. Position 200 is a phosphoserine (serine 200). Tyrosine 536 carries the post-translational modification Phosphotyrosine. The tract at residues methionine 572–aspartate 594 is actin-binding. IQ domains lie at isoleucine 699–lysine 719 and threonine 721–histidine 741. The TH1 domain occupies glycine 812 to glycine 1005.

This sequence belongs to the TRAFAC class myosin-kinesin ATPase superfamily. Myosin family. As to quaternary structure, interacts (via the two IQ motifs) with calmodulin. Binds an additional calmodulin chain via a third, C-terminal region. Interacts with F-actin. Expressed in many tissues. Highest levels in brain, followed by lung and ovary; expression is lowest in spleen.

It is found in the cytoplasm. Its subcellular location is the perikaryon. The protein resides in the cell projection. The protein localises to the dendrite. It localises to the early endosome. It is found in the cell cortex. Unconventional myosin that functions as actin-based motor protein with ATPase activity. Plays a role in endosomal protein trafficking, and especially in the transfer of cargo proteins from early to recycling endosomes. Required for normal planar cell polarity in ciliated tracheal cells, for normal rotational polarity of cilia, and for coordinated, unidirectional ciliary movement in the trachea. Required for normal, polarized cilia organization in brain ependymal epithelial cells. In Homo sapiens (Human), this protein is Unconventional myosin-Id (MYO1D).